A 394-amino-acid polypeptide reads, in one-letter code: Choline/ethanolamine kinase (394 aa).

A disordered region spans residues 1–42 (MAADGTGVVGGGAVGGGLPKDGLQDAKCPEPIPNRRRASSLS). Position 2 is an N-acetylalanine (Ala-2). Residues 7-19 (GVVGGGAVGGGLP) show a composition bias toward gly residues. Residues 75–81 (SGGLSNL), Arg-104, 146–152 (QYLPSRP), Gln-244, and Asp-264 contribute to the ATP site. 77-79 (GLS) contributes to the substrate binding site.

Belongs to the choline/ethanolamine kinase family. In terms of assembly, homodimer, and heterodimer with CHKA. In terms of tissue distribution, expressed ubiquitously with the highest level in testis.

The catalysed reaction is choline + ATP = phosphocholine + ADP + H(+). It catalyses the reaction ethanolamine + ATP = phosphoethanolamine + ADP + H(+). Its pathway is phospholipid metabolism; phosphatidylethanolamine biosynthesis; phosphatidylethanolamine from ethanolamine: step 1/3. Functionally, has a key role in phospholipid metabolism, and catalyzes the first step of phosphatidylethanolamine and phosphatidylcholine biosynthesis. The protein is Choline/ethanolamine kinase (Chkb) of Mus musculus (Mouse).